A 387-amino-acid polypeptide reads, in one-letter code: Putative odorant receptor 19b (387 aa).

Residues 1-40 (MDISKVDSTRALVNHWRIFRIMGIHPPGKRTFWGRHYTAY) lie on the Cytoplasmic side of the membrane. The chain crosses the membrane as a helical span at residues 41-61 (SMVWNVTFHICIWVSFSVNLL). Topologically, residues 62 to 71 (QSNSLETFCE) are extracellular. Residues 72–92 (SLCVTMPHTLYMLKLINVRRM) form a helical membrane-spanning segment. The Cytoplasmic portion of the chain corresponds to 93–127 (RGEMISSHWLLRLLDKRLGCADERQIIMAGIERAE). Residues 128 to 148 (FIFRTIFRGLACTVVLGIIYI) traverse the membrane as a helical segment. At 149 to 171 (SASSEPTLMYPTWIPWNWKDSTS) the chain is on the extracellular side. Residues 172–192 (AYLATAMLHTTALMANATLVL) traverse the membrane as a helical segment. Over 193-254 (NLSSYPGTYL…LRLFKSLERS (62 aa)) the chain is Cytoplasmic. Residues 255–275 (LSMTCFLQFFSTACAQCTICY) traverse the membrane as a helical segment. Residues 276–285 (FLLFGNVGIM) are Extracellular-facing. The helical transmembrane segment at 286–306 (RFMNMLFLLVILTTETLLLCY) threads the bilayer. At 307-336 (TAELPCKEGESLLTAVYSCNWLSQSVNFRR) the chain is on the cytoplasmic side. A helical transmembrane segment spans residues 337–357 (LLLLMLARCQIPMILVSGVIV). The Extracellular segment spans residues 358 to 387 (PISMKTFTVMIKGAYTMLTLLNEIRKTSLE).

It belongs to the insect chemoreceptor superfamily. Heteromeric odorant receptor channel (TC 1.A.69) family. Or2a subfamily. As to quaternary structure, interacts with Orco. Complexes exist early in the endomembrane system in olfactory sensory neurons (OSNs), coupling these complexes to the conserved ciliary trafficking pathway.

The protein localises to the cell membrane. Its function is as follows. Odorant receptor which mediates acceptance or avoidance behavior, depending on its substrates. The odorant receptor repertoire encodes a large collection of odor stimuli that vary widely in identity, intensity, and duration. May form a complex with Orco to form odorant-sensing units, providing sensitive and prolonged odorant signaling and calcium permeability. The polypeptide is Putative odorant receptor 19b (Drosophila melanogaster (Fruit fly)).